The chain runs to 391 residues: Steroid 3-ketoacyl-CoA thiolase (391 aa).

Cys93 (acyl-thioester intermediate) is an active-site residue. CoA contacts are provided by residues Gln151, 221–223 (RET), and Ser246. Residues His347 and Cys377 each act as proton acceptor in the active site. Gly379 provides a ligand contact to substrate.

It belongs to the thiolase-like superfamily. Thiolase family. Dimer of dimers.

It catalyses the reaction an acyl-CoA + acetyl-CoA = a 3-oxoacyl-CoA + CoA. The catalysed reaction is 3-oxochol-4-en-22-oyl-CoA + acetyl-CoA = 3,22-dioxochol-4-en-24-oyl-CoA + CoA. Its pathway is steroid metabolism; cholesterol degradation. Its function is as follows. Involved in the beta-oxidation of the cholesterol side chain. It is important for utilization of cholesterol as a sole carbon source in vitro and for full virulence in the chronic stage of mouse lung infection. Catalyzes the thiolysis of 3,22-dioxochol-4-en-24-oyl-CoA to yield 3-oxo-4-pregnene-20-carboxyl-CoA (3-OPC-CoA) and acetyl-CoA. Also able to use acetoacetyl-CoA (AcAcCoA) as substrate. The chain is Steroid 3-ketoacyl-CoA thiolase (fadA5) from Mycobacterium tuberculosis (strain ATCC 25618 / H37Rv).